Reading from the N-terminus, the 142-residue chain is MLKLTLTILAAVLLVTPAFGKVYTRCSLAREMHTLGVPKNQLARWTCIAEHESAYNTKAVGSMNSNGSRDYGIFQINNYYWCSPPSGAFSYNECKIKCADFLVDSIEPAVKCAQLVLRQQGWSAWSTWKYCDHTLPSIDDCF.

The signal sequence occupies residues 1-20; that stretch reads MLKLTLTILAAVLLVTPAFG. Residues 21–142 enclose the C-type lysozyme domain; that stretch reads KVYTRCSLAR…HTLPSIDDCF (122 aa). 4 disulfides stabilise this stretch: Cys26/Cys141, Cys47/Cys131, Cys82/Cys98, and Cys94/Cys112. The active site involves Glu52. N-linked (GlcNAc...) asparagine glycosylation is present at Asn66. Asp70 is a catalytic residue.

The protein belongs to the glycosyl hydrolase 22 family. As to expression, expressed only in the midgut where it is concentrated around the middle in all larval stages.

It localises to the secreted. The catalysed reaction is Hydrolysis of (1-&gt;4)-beta-linkages between N-acetylmuramic acid and N-acetyl-D-glucosamine residues in a peptidoglycan and between N-acetyl-D-glucosamine residues in chitodextrins.. Its function is as follows. Lysozymes have primarily a bacteriolytic function. Shows antibacterial activity against Gram-positive bacterium M.luteus but shows no activity against Gram-negative bacterium E.coli. Likely to play a role in the eradication of ingested pathogens during their passage through the intestine. In Lucilia sericata (Green bottle fly), this protein is Lysozyme 2.